Here is a 237-residue protein sequence, read N- to C-terminus: 1-(5-phosphoribosyl)-5-[(5-phosphoribosylamino)methylideneamino] imidazole-4-carboxamide isomerase (237 aa).

The active-site Proton acceptor is Asp-8. The active-site Proton donor is Asp-130.

Belongs to the HisA/HisF family.

Its subcellular location is the cytoplasm. The catalysed reaction is 1-(5-phospho-beta-D-ribosyl)-5-[(5-phospho-beta-D-ribosylamino)methylideneamino]imidazole-4-carboxamide = 5-[(5-phospho-1-deoxy-D-ribulos-1-ylimino)methylamino]-1-(5-phospho-beta-D-ribosyl)imidazole-4-carboxamide. It participates in amino-acid biosynthesis; L-histidine biosynthesis; L-histidine from 5-phospho-alpha-D-ribose 1-diphosphate: step 4/9. The chain is 1-(5-phosphoribosyl)-5-[(5-phosphoribosylamino)methylideneamino] imidazole-4-carboxamide isomerase from Halothermothrix orenii (strain H 168 / OCM 544 / DSM 9562).